Reading from the N-terminus, the 251-residue chain is MGRPLEGQPLRALDLYPEPAFLRSGKDPKSSPASSPSFAVLGPEVRSTGGQAGSRRRPSAPCSQDRAAAEGAPALLGGSPSSGSPGHPPGSAFGVEAGCRALNVSEHARGGFALGLPFGLSGGAYLFLLLDGAGDPKPTPEAPISSADGRAWFPSESSWQLPQLPAGSTSGSEPRARPGLGPRQLLTGPRDGAAGQGPGRGLTARLGREREIDCGPRQAGHGGTATDTGRAGSGARHRPPRDRGTPGLRTH.

Disordered regions lie at residues 1-92 (MGRP…PGSA) and 137-251 (KPTP…LRTH). Residues 69-92 (AEGAPALLGGSPSSGSPGHPPGSA) show a composition bias toward low complexity. Positions 155–172 (SESSWQLPQLPAGSTSGS) are enriched in polar residues.

This is an uncharacterized protein from Homo sapiens (Human).